The chain runs to 434 residues: Protein translocase subunit SecY (434 aa).

A run of 10 helical transmembrane segments spans residues 19-39 (LFTL…IPGI), 73-93 (IFML…LLVY), 117-137 (YLTI…AKGI), 148-168 (YIFV…WFGE), 179-199 (TSLI…FNLF), 209-229 (VNPV…ILII), 264-284 (VLPV…LSGF), 300-320 (PNGF…TYFY), 362-382 (FSGS…QNIF), and 391-411 (IMGG…LIHI).

Belongs to the SecY/SEC61-alpha family. Component of the Sec protein translocase complex. Heterotrimer consisting of SecY, SecE and SecG subunits. The heterotrimers can form oligomers, although 1 heterotrimer is thought to be able to translocate proteins. Interacts with the ribosome. Interacts with SecDF, and other proteins may be involved. Interacts with SecA.

It is found in the cell inner membrane. The central subunit of the protein translocation channel SecYEG. Consists of two halves formed by TMs 1-5 and 6-10. These two domains form a lateral gate at the front which open onto the bilayer between TMs 2 and 7, and are clamped together by SecE at the back. The channel is closed by both a pore ring composed of hydrophobic SecY resides and a short helix (helix 2A) on the extracellular side of the membrane which forms a plug. The plug probably moves laterally to allow the channel to open. The ring and the pore may move independently. This chain is Protein translocase subunit SecY, found in Borreliella burgdorferi (strain ATCC 35210 / DSM 4680 / CIP 102532 / B31) (Borrelia burgdorferi).